A 632-amino-acid polypeptide reads, in one-letter code: Extracellular metalloproteinase 1 (632 aa).

An N-terminal signal peptide occupies residues 1–19; that stretch reads MHGLLLAAGLISLPLHVLA. A propeptide spanning residues 20–246 is cleaved from the precursor; it reads HPQPSSTSLA…VVDYVAHATF (227 aa). N284 carries N-linked (GlcNAc...) asparagine glycosylation. Zn(2+) is bound at residue T430. H431 is a catalytic residue. Residue S434 coordinates Zn(2+). N-linked (GlcNAc...) asparagine glycosylation occurs at N591.

It belongs to the peptidase M36 family. It depends on Zn(2+) as a cofactor.

The protein resides in the secreted. PMSF, soybean trypsin inhibitor (SBTI) and chymostatin strongly inhibit the proteinase. Functionally, secreted metalloproteinase probably acting as a virulence factor. This Arthroderma otae (Microsporum canis) protein is Extracellular metalloproteinase 1 (MEP1).